We begin with the raw amino-acid sequence, 393 residues long: Acyl-homoserine-lactone synthase OpaM (393 aa).

This sequence belongs to the LuxM / VanM family.

The enzyme catalyses a fatty acyl-[ACP] + S-adenosyl-L-methionine = an N-acyl-L-homoserine lactone + S-methyl-5'-thioadenosine + holo-[ACP] + H(+). This is Acyl-homoserine-lactone synthase OpaM (opaM) from Vibrio parahaemolyticus serotype O3:K6 (strain RIMD 2210633).